A 461-amino-acid polypeptide reads, in one-letter code: DNA polymerase delta subunit 3 (461 aa).

3 disordered regions span residues 148–229, 249–380, and 399–461; these read VAQA…SAKG, VPGQ…KRVL, and YESE…CQKK. Residues 155-172 are compositionally biased toward polar residues; it reads ARSSSQTPSDTSAVSTPP. The segment covering 205-214 has biased composition (basic and acidic residues); the sequence is DANKEPKAKE. Residues 215-228 are compositionally biased toward low complexity; the sequence is APSVSAASSKPSAK. Residues 279–304 show a composition bias toward basic and acidic residues; it reads KPGRKTEPAKIQQKDKKSKMKRMDKS. Residues 371–380 show a composition bias toward basic residues; sequence GKKRKRKRVL. Positions 427 to 436 are enriched in basic and acidic residues; the sequence is VKKEPKEERK. Positions 451–458 match the PIP-box motif; it reads QISIMGFC.

As to quaternary structure, component of both the DNA polymerase delta and DNA polymerase zeta complexes. The tetrameric DNA polymerase delta complex (Pol-delta4), which consists of POLD1/p125, POLD2/p50, POLD3/p66/p68 and POLD4/p12, with POLD1 bearing DNA polymerase and 3' to 5' proofreading exonuclease activities.

The protein localises to the cytoplasm. It is found in the nucleus. Accessory component of both the DNA polymerase delta complex and the DNA polymerase zeta complex. As a component of the trimeric and tetrameric DNA polymerase delta complexes (Pol-delta3 and Pol-delta4, respectively), plays a role in high fidelity genome replication, including in lagging strand synthesis, and repair. Required for optimal Pol-delta activity. Stabilizes the Pol-delta complex and plays a major role in Pol-delta stimulation by PCNA. Pol-delta3 and Pol-delta4 are characterized by the absence or the presence of POLD4. They exhibit differences in catalytic activity. Most notably, Pol-delta3 shows higher proofreading activity than Pol-delta4. Although both Pol-delta3 and Pol-delta4 process Okazaki fragments in vitro, Pol-delta3 may also be better suited to fulfill this task, exhibiting near-absence of strand displacement activity compared to Pol-delta4 and stalling on encounter with the 5'-blocking oligonucleotides. Pol-delta3 idling process may avoid the formation of a gap, while maintaining a nick that can be readily ligated. Along with DNA polymerase kappa, DNA polymerase delta carries out approximately half of nucleotide excision repair (NER) synthesis following UV irradiation. In this context, POLD3, along with PCNA and RFC1-replication factor C complex, is required to recruit POLD1, the catalytic subunit of the polymerase delta complex, to DNA damage sites. Under conditions of DNA replication stress, required for the repair of broken replication forks through break-induced replication (BIR). Involved in the translesion synthesis (TLS) of templates carrying O6-methylguanine or abasic sites performed by Pol-delta4, independently of DNA polymerase zeta (REV3L) or eta (POLH). Facilitates abasic site bypass by DNA polymerase delta by promoting extension from the nucleotide inserted opposite the lesion. Also involved in TLS, as a component of the tetrameric DNA polymerase zeta complex. Along with POLD2, dramatically increases the efficiency and processivity of DNA synthesis of the DNA polymerase zeta complex compared to the minimal zeta complex, consisting of only REV3L and REV7. This Gallus gallus (Chicken) protein is DNA polymerase delta subunit 3 (POLD3).